Here is a 248-residue protein sequence, read N- to C-terminus: MALLEICCYSMECALTAQRNGADRIELCAAPKEGGLTPSFGILRSVREHITIPVHPIIRPRGGDFYYTDGEFAAMLEDIRLVRELGFPGLVTGVLTVDGDVDMSRMEKIMTAAGPLAVTFHRAFDMCANPFNALKNLADAGVARVLTSGQKADAAQGLSIIMELIAQGDAPIIMAGAGVRANNLQNFLDAGVREVHSSAGVLLPSPMRYRNQGLSMSADIQADEYSRYRVEGAAVAEMKGIIVRHQAK.

This sequence belongs to the CutC family. As to quaternary structure, homodimer.

It localises to the cytoplasm. This Salmonella paratyphi A (strain AKU_12601) protein is PF03932 family protein CutC.